Consider the following 344-residue polypeptide: MDPTVVLITGCSSGIGMHLAVRLASDRSQSFKVYATLRDLKAQGPLLEAARTQGCPPGSLEILELDVRDSKSVAAAQACVTEGRVDVLVCNAGRGLFGPLEAHELNAVGAVLDVNVLGTIRMLQAFLPDMKRRHSGRVLVTASVGGLMGLPFHEVYCASKFALEGLCESLAILLPLFGVHVSLIECGAVHTAFYEKLVGGPGGALERADAQTRHLFAHYLRGYEQALSEAQDPEEVTELFLTAMRAPQPALRYFSTNRFLPLARMRTEDPSGSSYVAAMHQEAFSNLQTQENAKAGAQVPGVSDTASSALICLPECAIPRVASELGWSASDKPGQDNSCYQQKI.

An NAD(+)-binding site is contributed by 3–32; it reads PTVVLITGCSSGIGMHLAVRLASDRSQSFK. NADP(+)-binding positions include 10 to 38 and Asp-66; that span reads GCSS…ATLR. Residue Ser-135 is modified to Phosphoserine. Ser-143 is a substrate binding site. Tyr-156 (proton acceptor) is an active-site residue. NADP(+) is bound at residue Lys-160.

The protein belongs to the short-chain dehydrogenases/reductases (SDR) family. In terms of assembly, homodimer. Exists predominantly as a homodimer but also exits as monomer.

Its subcellular location is the cytoplasm. It carries out the reaction 17beta-estradiol + NAD(+) = estrone + NADH + H(+). The enzyme catalyses 17beta-estradiol + NADP(+) = estrone + NADPH + H(+). It catalyses the reaction testosterone + NADP(+) = androst-4-ene-3,17-dione + NADPH + H(+). The protein operates within steroid biosynthesis; estrogen biosynthesis. In terms of biological role, favors the reduction of estrogens and androgens. Converts estrone (E1) to a more potent estrogen, 17beta-estradiol (E2). Also has 20-alpha-HSD activity. Uses preferentially NADH. This Mus musculus (Mouse) protein is 17-beta-hydroxysteroid dehydrogenase type 1.